A 594-amino-acid chain; its full sequence is Actin-histidine N-methyltransferase (594 aa).

Residues 1–23 (MGKKSRVKTQKSGTGATASVSPK) are disordered. The segment covering 10–23 (QKSGTGATASVSPK) has biased composition (polar residues). Residues Arg75, 104 to 106 (EGF), Arg254, 275 to 279 (DMCNH), and 325 to 327 (SGF) contribute to the S-adenosyl-L-methionine site. Residues 94–314 (EGFEMVSFKE…AGEQIYIFYG (221 aa)) form the SET domain. The interval 553–594 (INGENSIPNGTRLEKEDLNQEQSKRVTEDAKEPSDSTEEVKE) is disordered. The segment covering 564–594 (RLEKEDLNQEQSKRVTEDAKEPSDSTEEVKE) has biased composition (basic and acidic residues).

Belongs to the class V-like SAM-binding methyltransferase superfamily. SETD3 actin-histidine methyltransferase family. As to quaternary structure, interacts with MYOD1. Phosphorylated by GSK3B, which is required for recognition by the SCF(FBXW7) complex and subsequent degradation. Post-translationally, ubiquitinated by the SCF(FBXW7) complex following phosphorylation by GSK3B, leading to its degradation by the proteasome.

The protein localises to the cytoplasm. Its subcellular location is the nucleus. The enzyme catalyses L-histidyl-[protein] + S-adenosyl-L-methionine = N(tele)-methyl-L-histidyl-[protein] + S-adenosyl-L-homocysteine + H(+). Protein-histidine N-methyltransferase that specifically mediates 3-methylhistidine (tele-methylhistidine) methylation of actin at 'His-73'. Histidine methylation of actin is required for smooth muscle contraction of the laboring uterus during delivery. Does not have protein-lysine N-methyltransferase activity and probably only catalyzes histidine methylation of actin. In Rhinolophus ferrumequinum (Greater horseshoe bat), this protein is Actin-histidine N-methyltransferase.